The chain runs to 371 residues: Flagellar P-ring protein (371 aa).

Residues 1 to 25 (MTMRVCKWLLTFALLFAATLTPAHS) form the signal peptide.

Belongs to the FlgI family. As to quaternary structure, the basal body constitutes a major portion of the flagellar organelle and consists of four rings (L,P,S, and M) mounted on a central rod.

The protein localises to the periplasm. Its subcellular location is the bacterial flagellum basal body. In terms of biological role, assembles around the rod to form the L-ring and probably protects the motor/basal body from shearing forces during rotation. The chain is Flagellar P-ring protein from Sinorhizobium fredii (strain NBRC 101917 / NGR234).